Consider the following 222-residue polypeptide: N-(5'-phosphoribosyl)anthranilate isomerase (222 aa).

The protein belongs to the TrpF family.

It catalyses the reaction N-(5-phospho-beta-D-ribosyl)anthranilate = 1-(2-carboxyphenylamino)-1-deoxy-D-ribulose 5-phosphate. The protein operates within amino-acid biosynthesis; L-tryptophan biosynthesis; L-tryptophan from chorismate: step 3/5. The sequence is that of N-(5'-phosphoribosyl)anthranilate isomerase from Rhizobium johnstonii (strain DSM 114642 / LMG 32736 / 3841) (Rhizobium leguminosarum bv. viciae).